The primary structure comprises 126 residues: Chorion class B protein M1768 (126 aa).

Residues 1 to 17 (YGGLGYGGLGGGCGRGF) form a left arm region. Positions 18–86 (SGGGLPVATA…GNGAVGITRE (69 aa)) are central domain. The tract at residues 87 to 126 (GGFGYGAGYGDGYGLGFGGYGGGYGLGYGGYGGCGCSWGY) is right arm (Gly-rich tandem repeats).

It belongs to the chorion protein family.

Its function is as follows. This protein is one of many from the eggshell of the silk moth. This Bombyx mori (Silk moth) protein is Chorion class B protein M1768.